The sequence spans 205 residues: Small ribosomal subunit protein uS4 (205 aa).

Positions 94–157 (SRLDTVVYRM…QQIPLIQESI (64 aa)) constitute an S4 RNA-binding domain.

The protein belongs to the universal ribosomal protein uS4 family. As to quaternary structure, part of the 30S ribosomal subunit. Contacts protein S5. The interaction surface between S4 and S5 is involved in control of translational fidelity.

One of the primary rRNA binding proteins, it binds directly to 16S rRNA where it nucleates assembly of the body of the 30S subunit. Functionally, with S5 and S12 plays an important role in translational accuracy. The protein is Small ribosomal subunit protein uS4 of Rickettsia typhi (strain ATCC VR-144 / Wilmington).